A 336-amino-acid chain; its full sequence is MSTQFSLSSNISYDDPISFECDTSYDSGLELLKYIIQVTLLSINFILNFLIIRVTMFSKNNDFRENSFFIIYAADLIMGMYMSLSEILVGRLFIYVTLLCPILAPYFFTPSIFLKIFFTLSHYSQGFKTVSQVFLSFNRMTCVVFPVGYSAIWKRILTPIIIVLFVLPIGIIWNVLISRVYANPSFGGFSVNYIKLVSWASLSKLHLTYFIVSLILIIVISGVTLYALLILKHRIKSAEQTLTIATMVLSLEFSFLSVIQIYFAFFSSSTSEWRPFLLRVMYFTYDLLNFSTTIIFISCNPKLRKMLLKRMQSSVTVGRSTSNSTIPVRIIPALIH.

The next 8 helical transmembrane spans lie at 32–52 (LKYIIQVTLLSINFILNFLII), 68–88 (FFIIYAADLIMGMYMSLSEIL), 93–113 (FIYVTLLCPILAPYFFTPSIF), 133–153 (VFLSFNRMTCVVFPVGYSAIW), 156–176 (ILTPIIIVLFVLPIGIIWNVL), 210–230 (FIVSLILIIVISGVTLYALLI), 246–266 (TMVLSLEFSFLSVIQIYFAFF), and 277–297 (LLRVMYFTYDLLNFSTTIIFI).

Belongs to the nematode receptor-like protein srg family.

The protein localises to the membrane. The sequence is that of Serpentine receptor class gamma-13 (srg-13) from Caenorhabditis elegans.